Consider the following 458-residue polypeptide: A-type ATP synthase subunit B (458 aa).

The protein belongs to the ATPase alpha/beta chains family. As to quaternary structure, has multiple subunits with at least A(3), B(3), C, D, E, F, H, I and proteolipid K(x).

It localises to the cell membrane. In terms of biological role, component of the A-type ATP synthase that produces ATP from ADP in the presence of a proton gradient across the membrane. The B chain is a regulatory subunit. This chain is A-type ATP synthase subunit B, found in Methanocella arvoryzae (strain DSM 22066 / NBRC 105507 / MRE50).